The chain runs to 688 residues: Translation initiation factor IF-2 (688 aa).

Composition is skewed to basic and acidic residues over residues G53 to E62 and K86 to N95. Residues G53–E100 are disordered. In terms of domain architecture, tr-type G spans K187–E354. Residues G196–T203 are G1. G196–T203 serves as a coordination point for GTP. Residues G221–H225 form a G2 region. The interval D242–G245 is G3. GTP contacts are provided by residues D242–H246 and N296–D299. Positions N296–D299 are G4. A G5 region spans residues S332–H334.

This sequence belongs to the TRAFAC class translation factor GTPase superfamily. Classic translation factor GTPase family. IF-2 subfamily.

The protein localises to the cytoplasm. Its function is as follows. One of the essential components for the initiation of protein synthesis. Protects formylmethionyl-tRNA from spontaneous hydrolysis and promotes its binding to the 30S ribosomal subunits. Also involved in the hydrolysis of GTP during the formation of the 70S ribosomal complex. This chain is Translation initiation factor IF-2, found in Clostridium botulinum (strain Kyoto / Type A2).